The primary structure comprises 787 residues: Endonuclease MutS2 (787 aa).

Residue glycine 331–threonine 338 coordinates ATP. A Smr domain is found at isoleucine 711–lysine 786.

It belongs to the DNA mismatch repair MutS family. MutS2 subfamily. As to quaternary structure, homodimer. Binds to stalled ribosomes, contacting rRNA.

Functionally, endonuclease that is involved in the suppression of homologous recombination and thus may have a key role in the control of bacterial genetic diversity. Acts as a ribosome collision sensor, splitting the ribosome into its 2 subunits. Detects stalled/collided 70S ribosomes which it binds and splits by an ATP-hydrolysis driven conformational change. Acts upstream of the ribosome quality control system (RQC), a ribosome-associated complex that mediates the extraction of incompletely synthesized nascent chains from stalled ribosomes and their subsequent degradation. Probably generates substrates for RQC. The sequence is that of Endonuclease MutS2 from Caldicellulosiruptor bescii (strain ATCC BAA-1888 / DSM 6725 / KCTC 15123 / Z-1320) (Anaerocellum thermophilum).